A 1359-amino-acid polypeptide reads, in one-letter code: DNA-directed RNA polymerase subunit beta (1359 aa).

It belongs to the RNA polymerase beta chain family. The RNAP catalytic core consists of 2 alpha, 1 beta, 1 beta' and 1 omega subunit. When a sigma factor is associated with the core the holoenzyme is formed, which can initiate transcription.

The catalysed reaction is RNA(n) + a ribonucleoside 5'-triphosphate = RNA(n+1) + diphosphate. In terms of biological role, DNA-dependent RNA polymerase catalyzes the transcription of DNA into RNA using the four ribonucleoside triphosphates as substrates. The protein is DNA-directed RNA polymerase subunit beta of Nitrosococcus oceani (strain ATCC 19707 / BCRC 17464 / JCM 30415 / NCIMB 11848 / C-107).